The primary structure comprises 126 residues: Large ribosomal subunit protein bL12 (126 aa).

It belongs to the bacterial ribosomal protein bL12 family. As to quaternary structure, homodimer. Part of the ribosomal stalk of the 50S ribosomal subunit. Forms a multimeric L10(L12)X complex, where L10 forms an elongated spine to which 2 to 4 L12 dimers bind in a sequential fashion. Binds GTP-bound translation factors.

In terms of biological role, forms part of the ribosomal stalk which helps the ribosome interact with GTP-bound translation factors. Is thus essential for accurate translation. In Moorella thermoacetica (strain ATCC 39073 / JCM 9320), this protein is Large ribosomal subunit protein bL12.